The primary structure comprises 185 residues: Elongation factor P (185 aa).

This sequence belongs to the elongation factor P family.

Its subcellular location is the cytoplasm. Its pathway is protein biosynthesis; polypeptide chain elongation. Functionally, involved in peptide bond synthesis. Stimulates efficient translation and peptide-bond synthesis on native or reconstituted 70S ribosomes in vitro. Probably functions indirectly by altering the affinity of the ribosome for aminoacyl-tRNA, thus increasing their reactivity as acceptors for peptidyl transferase. The sequence is that of Elongation factor P from Desulfitobacterium hafniense (strain Y51).